We begin with the raw amino-acid sequence, 29 residues long: Cyclotide mden-F (29 aa).

The cyclopeptide (Gly-Asn) cross-link spans 1–29 (GLPICGETCFFGKCNTPKCTCINPICYKN). 3 disulfides stabilise this stretch: Cys-5/Cys-19, Cys-9/Cys-21, and Cys-14/Cys-26.

Belongs to the cyclotide family. Post-translationally, this is a cyclic peptide.

In terms of biological role, probably participates in a plant defense mechanism. The polypeptide is Cyclotide mden-F (Melicytus dentatus (Tree violet)).